The primary structure comprises 101 residues: MGTRFLLALFLVLLVLGFEVQGAHLPQQEESASPALLTQMQESLSSYWDSAKAAASKLYQKTYLPTVDEKLRDMYSKSTAAMSTYAGILTDQVLSMLKGEE.

An N-terminal signal peptide occupies residues 1 to 22 (MGTRFLLALFLVLLVLGFEVQG). The tract at residues 66–74 (TVDEKLRDM) is lipid binding. Positions 78–101 (STAAMSTYAGILTDQVLSMLKGEE) are lipoprotein lipase cofactor.

It belongs to the apolipoprotein C2 family. Proapolipoprotein C-II is synthesized as a sialic acid containing glycoprotein which is subsequently desialylated prior to its proteolytic processing. Post-translationally, proapolipoprotein C-II, the major form found in plasma undergoes proteolytic cleavage of its N-terminal hexapeptide to generate apolipoprotein C-II, which occurs as the minor form in plasma.

It is found in the secreted. Functionally, component of chylomicrons, very low-density lipoproteins (VLDL), low-density lipoproteins (LDL), and high-density lipoproteins (HDL) in plasma. Plays an important role in lipoprotein metabolism as an activator of lipoprotein lipase. Both proapolipoprotein C-II and apolipoprotein C-II can activate lipoprotein lipase. This Aotus nancymaae (Ma's night monkey) protein is Apolipoprotein C-II (APOC2).